The primary structure comprises 280 residues: Dual adapter for phosphotyrosine and 3-phosphotyrosine and 3-phosphoinositide (280 aa).

A disordered region spans residues 1–20 (MGRAELLEGKMSTQDPSDLW). Residues 35–129 (WYHGNLTRHA…GTLMVLKHPY (95 aa)) enclose the SH2 domain. Residue tyrosine 139 is modified to Phosphotyrosine. Residue serine 141 is modified to Phosphoserine. The PH domain maps to 164-259 (LGTKEGYLTK…WIKILRWKLS (96 aa)).

Interacts with PtdIns(3,4,5)P3 and PLCG2. In vitro, interacts with PtdIns(3,4)P2. In terms of processing, phosphorylated on tyrosine residues. Highly expressed in placenta and lung, followed by brain, heart, kidney, liver, pancreas and skeletal muscle. Expressed by B-lymphocytes, but not T-lymphocytes or nonhematopoietic cells.

It is found in the cytoplasm. The protein localises to the membrane. In terms of biological role, may act as a B-cell-associated adapter that regulates B-cell antigen receptor (BCR)-signaling downstream of PI3K. This is Dual adapter for phosphotyrosine and 3-phosphotyrosine and 3-phosphoinositide (DAPP1) from Homo sapiens (Human).